Here is a 143-residue protein sequence, read N- to C-terminus: Large ribosomal subunit protein uL11 (143 aa).

This sequence belongs to the universal ribosomal protein uL11 family. As to quaternary structure, part of the ribosomal stalk of the 50S ribosomal subunit. Interacts with L10 and the large rRNA to form the base of the stalk. L10 forms an elongated spine to which L12 dimers bind in a sequential fashion forming a multimeric L10(L12)X complex. One or more lysine residues are methylated.

Its function is as follows. Forms part of the ribosomal stalk which helps the ribosome interact with GTP-bound translation factors. This is Large ribosomal subunit protein uL11 from Pseudomonas fluorescens (strain Pf0-1).